Here is a 124-residue protein sequence, read N- to C-terminus: UPF0102 protein Rcas_2007 (124 aa).

This sequence belongs to the UPF0102 family.

In Roseiflexus castenholzii (strain DSM 13941 / HLO8), this protein is UPF0102 protein Rcas_2007.